A 55-amino-acid chain; its full sequence is Large ribosomal subunit protein bL33 (55 aa).

Positions 1–11 (MAKSGRDKIKL) are enriched in basic and acidic residues. The interval 1 to 27 (MAKSGRDKIKLESTAGTGHFYTTTKNK) is disordered. Residues 14-24 (TAGTGHFYTTT) are compositionally biased toward polar residues.

This sequence belongs to the bacterial ribosomal protein bL33 family.

The protein is Large ribosomal subunit protein bL33 of Herminiimonas arsenicoxydans.